A 314-amino-acid polypeptide reads, in one-letter code: tRNA dimethylallyltransferase (314 aa).

Residue 40–47 coordinates ATP; it reads GPTASGKS. 42 to 47 provides a ligand contact to substrate; sequence TASGKS.

The protein belongs to the IPP transferase family. Monomer. Mg(2+) is required as a cofactor.

It catalyses the reaction adenosine(37) in tRNA + dimethylallyl diphosphate = N(6)-dimethylallyladenosine(37) in tRNA + diphosphate. Functionally, catalyzes the transfer of a dimethylallyl group onto the adenine at position 37 in tRNAs that read codons beginning with uridine, leading to the formation of N6-(dimethylallyl)adenosine (i(6)A). The polypeptide is tRNA dimethylallyltransferase (Cereibacter sphaeroides (strain KD131 / KCTC 12085) (Rhodobacter sphaeroides)).